Reading from the N-terminus, the 272-residue chain is Shikimate dehydrogenase (NADP(+)) (272 aa).

Shikimate is bound by residues 14-16 and threonine 61; that span reads SLS. Lysine 65 serves as the catalytic Proton acceptor. Aspartate 102 contributes to the shikimate binding site. NADP(+)-binding positions include 127-131, 151-156, and leucine 215; these read GAGGA and NRTPSK. Tyrosine 217 is a shikimate binding site. Glycine 239 provides a ligand contact to NADP(+).

This sequence belongs to the shikimate dehydrogenase family. Homodimer.

It catalyses the reaction shikimate + NADP(+) = 3-dehydroshikimate + NADPH + H(+). It functions in the pathway metabolic intermediate biosynthesis; chorismate biosynthesis; chorismate from D-erythrose 4-phosphate and phosphoenolpyruvate: step 4/7. Involved in the biosynthesis of the chorismate, which leads to the biosynthesis of aromatic amino acids. Catalyzes the reversible NADPH linked reduction of 3-dehydroshikimate (DHSA) to yield shikimate (SA). The chain is Shikimate dehydrogenase (NADP(+)) from Coxiella burnetii (strain Dugway 5J108-111).